The primary structure comprises 960 residues: RasGEF domain-containing serine/threonine-protein kinase X (960 aa).

A Protein kinase domain is found at 21–274 (LEFNEKIGKG…FDEILSQLKV (254 aa)). Residues 27-35 (IGKGSFGSV) and Lys-48 each bind ATP. The active-site Proton acceptor is Asp-140. Over residues 314–368 (NISFSPNNSNNNNNNNNNISNISPDITTGIQQINLSSSGGSNNSSPSTPPQGSQL) the composition is skewed to low complexity. Disordered regions lie at residues 314 to 372 (NISF…VSLA) and 393 to 413 (GQLSTTPPPTSPIQSRPHKPS). Residues 437–565 (PCYAALTSHI…LGTTISNNEL (129 aa)) enclose the N-terminal Ras-GEF domain. Positions 596–651 (NNNNNNNNNPVNNINNINNNNSVNSSSSNNNNNNNNNNSNNNNNNNNNNNNNNNNN) are disordered. One can recognise a Ras-GEF domain in the interval 712 to 957 (HSTELARQIT…KNNSLKCEPP (246 aa)).

Belongs to the protein kinase superfamily. TKL Ser/Thr protein kinase family.

It carries out the reaction L-seryl-[protein] + ATP = O-phospho-L-seryl-[protein] + ADP + H(+). The catalysed reaction is L-threonyl-[protein] + ATP = O-phospho-L-threonyl-[protein] + ADP + H(+). In terms of biological role, promotes the exchange of Ras-bound GDP by GTP. The protein is RasGEF domain-containing serine/threonine-protein kinase X (gefX) of Dictyostelium discoideum (Social amoeba).